Here is a 128-residue protein sequence, read N- to C-terminus: Fatty acid binding protein 1-B.1 (128 aa).

It belongs to the calycin superfamily. Fatty-acid binding protein (FABP) family. As to expression, expressed in the yolk syncytial layer (YSL) and subsequently in the intestinal bulb in developing embryos and larvae. In adults, expressed in the intestine.

It localises to the cytoplasm. Functionally, binds free fatty acids and their coenzyme A derivatives, bilirubin, and some other small molecules in the cytoplasm. May be involved in intracellular lipid transport. The protein is Fatty acid binding protein 1-B.1 (fabp1b.1) of Danio rerio (Zebrafish).